Here is a 448-residue protein sequence, read N- to C-terminus: Phosphoglucosamine mutase (448 aa).

The Phosphoserine intermediate role is filled by serine 99. 4 residues coordinate Mg(2+): serine 99, aspartate 238, aspartate 240, and aspartate 242. Serine 99 carries the phosphoserine modification.

Belongs to the phosphohexose mutase family. The cofactor is Mg(2+). Post-translationally, activated by phosphorylation.

The enzyme catalyses alpha-D-glucosamine 1-phosphate = D-glucosamine 6-phosphate. Catalyzes the conversion of glucosamine-6-phosphate to glucosamine-1-phosphate. This is Phosphoglucosamine mutase from Marinomonas sp. (strain MWYL1).